The chain runs to 239 residues: Fatty acid metabolism regulator protein (239 aa).

An HTH gntR-type domain is found at 6-74 (QSPAGFAEEY…HGKPTKINNF (69 aa)). Positions 34 to 53 (ERELSELIGVTRTTLREVLQ) form a DNA-binding region, H-T-H motif.

Homodimer.

It localises to the cytoplasm. Multifunctional regulator of fatty acid metabolism. The sequence is that of Fatty acid metabolism regulator protein from Pectobacterium carotovorum subsp. carotovorum (strain PC1).